The primary structure comprises 103 residues: Histone H4 (103 aa).

The span at 1–14 (MSGRGKGGKGLGKG) shows a compositional bias: gly residues. A disordered region spans residues 1-20 (MSGRGKGGKGLGKGGAKRHR). S2 is modified (N-acetylserine). The residue at position 17 (K17) is an N6-acetyllysine. A DNA-binding region spans residues 17–21 (KRHRK). K21 bears the N6-methyllysine mark.

Belongs to the histone H4 family. In terms of assembly, the nucleosome is a histone octamer containing two molecules each of H2A, H2B, H3 and H4 assembled in one H3-H4 heterotetramer and two H2A-H2B heterodimers. The octamer wraps approximately 147 bp of DNA.

The protein localises to the nucleus. It localises to the chromosome. Functionally, core component of nucleosome. Nucleosomes wrap and compact DNA into chromatin, limiting DNA accessibility to the cellular machineries which require DNA as a template. Histones thereby play a central role in transcription regulation, DNA repair, DNA replication and chromosomal stability. DNA accessibility is regulated via a complex set of post-translational modifications of histones, also called histone code, and nucleosome remodeling. This chain is Histone H4, found in Eucalyptus globulus (Tasmanian blue gum).